A 224-amino-acid chain; its full sequence is Ribonuclease T (224 aa).

The 175-residue stretch at 32–206 folds into the Exonuclease domain; sequence VVVDVETGGF…YDTEKTAELF (175 aa). Mg(2+) contacts are provided by Asp-35, Glu-37, His-193, and Asp-198. His-193 acts as the Proton donor/acceptor in catalysis.

It belongs to the RNase T family. In terms of assembly, homodimer. The cofactor is Mg(2+).

Functionally, trims short 3' overhangs of a variety of RNA species, leaving a one or two nucleotide 3' overhang. Responsible for the end-turnover of tRNA: specifically removes the terminal AMP residue from uncharged tRNA (tRNA-C-C-A). Also appears to be involved in tRNA biosynthesis. In Pseudomonas fluorescens (strain Pf0-1), this protein is Ribonuclease T.